The primary structure comprises 87 residues: Small ribosomal subunit protein bS20 (87 aa).

A disordered region spans residues 1 to 29 (MANTAQARKRARQAVKQNAHNSSQRSTLR). Residues 20–29 (HNSSQRSTLR) show a composition bias toward polar residues.

The protein belongs to the bacterial ribosomal protein bS20 family.

Its function is as follows. Binds directly to 16S ribosomal RNA. The chain is Small ribosomal subunit protein bS20 from Janthinobacterium sp. (strain Marseille) (Minibacterium massiliensis).